The sequence spans 103 residues: Large ribosomal subunit protein uL24 (103 aa).

The protein belongs to the universal ribosomal protein uL24 family. In terms of assembly, part of the 50S ribosomal subunit.

In terms of biological role, one of two assembly initiator proteins, it binds directly to the 5'-end of the 23S rRNA, where it nucleates assembly of the 50S subunit. One of the proteins that surrounds the polypeptide exit tunnel on the outside of the subunit. This Listeria monocytogenes serotype 4a (strain HCC23) protein is Large ribosomal subunit protein uL24.